Consider the following 81-residue polypeptide: Large ribosomal subunit protein bL31B (81 aa).

The protein belongs to the bacterial ribosomal protein bL31 family. Type B subfamily. In terms of assembly, part of the 50S ribosomal subunit.

In Lactococcus lactis subsp. cremoris (strain MG1363), this protein is Large ribosomal subunit protein bL31B.